Consider the following 168-residue polypeptide: Lipid transfer protein EARLI 1 (168 aa).

An N-terminal signal peptide occupies residues 1-25 (MASKNSASIALFFALNIIFFTLTAA). A disordered region spans residues 32–81 (PSPKHKPVPSPKPKPVPSPKPKPVPSPSVPSPSVPSPNPRPVTPPRTPGS). Residues 34–41 (PKHKPVPS) form an A-1 repeat. A 3 X 8 AA repeats A of P-K-[HP]-K-P-V-P-S region spans residues 34-57 (PKHKPVPSPKPKPVPSPKPKPVPS). Positions 39–78 (VPSPKPKPVPSPKPKPVPSPSVPSPSVPSPNPRPVTPPRT) are enriched in pro residues. The stretch at 42–49 (PKPKPVPS) is one A-2 repeat. An A-3 repeat occupies 50–57 (PKPKPVPS). Residues 58–62 (PSVPS) form a B-1 repeat. A 2 X 58 AA tandem repeats B of P-S-V-P-S region spans residues 58–67 (PSVPSPSVPS). One copy of the B-2 repeat lies at 63 to 67 (PSVPS).

This sequence belongs to the plant LTP family. PEARLI1 subfamily. As to expression, mostly expressed in aerial part of seedlings, and, to a lower extent, in roots. Higher basal levels in early-flowering ecotypes.

It localises to the secreted. Its subcellular location is the cell wall. Functionally, probable lipid transfer protein (LTP). May improve freezing survival. Seems to control the flowering process and lignin synthesis. Has an auxiliary role for germinability and early seedling development under low temperature and salt stress conditions, probably in an abscisic acid- (ABA) dependent manner. Confers resistance to Botrytis cinerea and exhibits anti-fungal activity, at least against S.cerevisiae, B.cinerea and Fusarium oxysporum, probably by increasing their membrane permeability. The polypeptide is Lipid transfer protein EARLI 1 (EARLI1) (Arabidopsis thaliana (Mouse-ear cress)).